Reading from the N-terminus, the 125-residue chain is Holo-[acyl-carrier-protein] synthase (125 aa).

2 residues coordinate Mg(2+): D8 and E57.

The protein belongs to the P-Pant transferase superfamily. AcpS family. Requires Mg(2+) as cofactor.

It is found in the cytoplasm. It carries out the reaction apo-[ACP] + CoA = holo-[ACP] + adenosine 3',5'-bisphosphate + H(+). Functionally, transfers the 4'-phosphopantetheine moiety from coenzyme A to a Ser of acyl-carrier-protein. This Thermus thermophilus (strain ATCC BAA-163 / DSM 7039 / HB27) protein is Holo-[acyl-carrier-protein] synthase.